A 421-amino-acid chain; its full sequence is Nacrein-like protein M (421 aa).

An N-linked (GlcNAc...) asparagine glycan is attached at asparagine 27. An Alpha-carbonic anhydrase domain is found at 33-420 (AGFSYDRSIC…KNKVTVYKSF (388 aa)). 3 residues coordinate Zn(2+): histidine 132, histidine 134, and histidine 157. Positions 197 to 206 (DGFGDEPDDE) are enriched in acidic residues. The disordered stretch occupies residues 197–303 (DGFGDEPDDE…GENGHKHGCR (107 aa)). The span at 207 to 219 (ECKRILKGHHPDN) shows a compositional bias: basic and acidic residues. Low complexity predominate over residues 220–295 (NENGNGDNGN…NNGDNGNNGE (76 aa)). 24 tandem repeats follow at residues 225-227 (GDN), 228-230 (GNN), 231-233 (GYN), 234-236 (GDN), 237-239 (GNN), 240-242 (GDN), 243-245 (GNN), 246-248 (GYN), 249-251 (GDN), 252-254 (GNN), 255-257 (GDN), 258-260 (GNN), 261-263 (GYN), 264-266 (GDN), 267-269 (GNN), 270-272 (GDN), 273-275 (GNN), 276-278 (GEN), 279-281 (GNN), 282-284 (GEN), 285-287 (GNN), 288-290 (GDN), 291-292 (GN), and 294-296 (GEN). Positions 225–296 (GDNGNNGYNG…NGDNGNNGEN (72 aa)) are 24 X 3 AA approximate tandem repeats of G-X-N. 361–362 (TT) contacts substrate.

This sequence belongs to the alpha-carbonic anhydrase family. In terms of assembly, homooligomer; disulfide-linked. May also be disulfide-linked to insoluble organic matrix. Requires Zn(2+) as cofactor. Expressed in the mantle.

It localises to the secreted. It is found in the extracellular space. The protein resides in the extracellular matrix. The catalysed reaction is hydrogencarbonate + H(+) = CO2 + H2O. Acts as a negative regulator for calcification in the shells of mollusks. May function both as a calcium concentrator and as a carbonic anhydrase required for production of carbonate ions, which are assembled to CaCO(3) at mineralization sites. Is important for shell formation in both the calcitic prismatic layer and the aragonitic nacreous layerr. Shows inhibitory activity of crystal formation when present in free state but, when attached to the insoluble matrix, may regulate the form and size of aragonite crystal. In Pinctada maxima (Silver-lipped pearl oyster), this protein is Nacrein-like protein M.